The sequence spans 253 residues: Probable glutathione transferase omega-2 (253 aa).

The GST N-terminal domain occupies 25-105 (GIYRIYNMRF…YLDDLFPESR (81 aa)). Catalysis depends on C35, which acts as the Nucleophile. Glutathione-binding positions include K62, V75, and 89-90 (ES). The GST C-terminal domain occupies 110–238 (DPYEKVQQKL…SQPTEMGVGF (129 aa)).

This sequence belongs to the GST superfamily. Omega family.

The enzyme catalyses RX + glutathione = an S-substituted glutathione + a halide anion + H(+). It carries out the reaction L-dehydroascorbate + 2 glutathione = glutathione disulfide + L-ascorbate. The catalysed reaction is methylarsonate + 2 glutathione + H(+) = methylarsonous acid + glutathione disulfide + H2O. Its function is as follows. Exhibits glutathione-dependent thiol transferase activity. Has dehydroascorbate reductase activity and may contribute to the recycling of ascorbic acid. Participates in the biotransformation of inorganic arsenic and reduces monomethylarsonic acid (MMA). In Caenorhabditis briggsae, this protein is Probable glutathione transferase omega-2.